A 191-amino-acid polypeptide reads, in one-letter code: Adenine phosphoribosyltransferase 5 (191 aa).

It belongs to the purine/pyrimidine phosphoribosyltransferase family. In terms of assembly, homodimer.

It localises to the cytoplasm. It catalyses the reaction AMP + diphosphate = 5-phospho-alpha-D-ribose 1-diphosphate + adenine. The protein operates within purine metabolism; AMP biosynthesis via salvage pathway; AMP from adenine: step 1/1. In terms of biological role, catalyzes a salvage reaction resulting in the formation of AMP, that is energically less costly than de novo synthesis. May contribute to the recycling of adenine into adenylate nucleotides and the inactivation of cytokinins by phosphoribosylation. Possesses low activity toward adenine, but can efficiently convert cytokinins from free bases (active form) to the corresponding nucleotides (inactive form). The protein is Adenine phosphoribosyltransferase 5 (APT5) of Arabidopsis thaliana (Mouse-ear cress).